A 130-amino-acid polypeptide reads, in one-letter code: Small ribosomal subunit protein uS8 (130 aa).

This sequence belongs to the universal ribosomal protein uS8 family. In terms of assembly, part of the 30S ribosomal subunit. Contacts proteins S5 and S12.

One of the primary rRNA binding proteins, it binds directly to 16S rRNA central domain where it helps coordinate assembly of the platform of the 30S subunit. The protein is Small ribosomal subunit protein uS8 of Aliivibrio fischeri (strain ATCC 700601 / ES114) (Vibrio fischeri).